The chain runs to 150 residues: UPF0178 protein Maqu_2186 (150 aa).

The protein belongs to the UPF0178 family.

This Marinobacter nauticus (strain ATCC 700491 / DSM 11845 / VT8) (Marinobacter aquaeolei) protein is UPF0178 protein Maqu_2186.